The following is a 123-amino-acid chain: Guanine nucleotide exchange factor MSS4 (123 aa).

Methionine 1 carries the post-translational modification N-acetylmethionine. Positions 9–123 (ELVSAEGRNR…YVALERVSHE (115 aa)) constitute an MSS4 domain. The Zn(2+) site is built by cysteine 23, cysteine 26, cysteine 94, and cysteine 97.

The protein belongs to the DSS4/MSS4 family. As to quaternary structure, interacts with RAB8A. In terms of tissue distribution, ubiquitous.

In terms of biological role, guanine-nucleotide-releasing protein that acts on members of the SEC4/YPT1/RAB subfamily. Stimulates GDP release from both YPT1, RAB3A and RAB10, but is less active on these proteins than on the SEC4 protein. Might play a general role in vesicular transport. This chain is Guanine nucleotide exchange factor MSS4 (RABIF), found in Homo sapiens (Human).